We begin with the raw amino-acid sequence, 245 residues long: MCGLRFIMGPVRLEILLFILAAYGAWAEATKEEEDDTERLPSKCEVCKLLSMELQEALSRTGRSREVLELGQVLDTGKRKRHVPYSLSETRLEEALENLCERILDYNVHAERKGSLRYAKGQSQTMATLKGLVQKGVKVDLGIPLELWDEPSVEVTFLKKQCETMLEEFEDVVGDWYFHHQEQPLQHFLCERHVLPASETACLREAWTGKEKISDGQEEADDEEEEEEEEITKTSGNPKHDPEDL.

The N-terminal stretch at M1–A27 is a signal peptide. Cystine bridges form between C44–C202, C47–C190, and C100–C162. A disordered region spans residues W207–L245. Positions G209–N237 form a coiled coil. Positions G216–E230 are enriched in acidic residues.

This sequence belongs to the canopy family. In terms of assembly, interacts with TLR4. Highly expressed in lung, spleen, thymus, and uterus. Moderately expressed in kidney, stomach and placenta. Weakly expressed in brain, heart, liver, small intestine, skeletal muscle and testis.

It localises to the secreted. Its function is as follows. Plays a role in the regulation of the cell surface expression of TLR4. This Mus musculus (Mouse) protein is Protein canopy homolog 4 (Cnpy4).